The chain runs to 104 residues: Circadian clock oscillator protein KaiB (104 aa).

It belongs to the KaiB family. As to quaternary structure, the KaiABC complex composition changes during the circadian cycle to control KaiC phosphorylation. Complexes KaiC(6), KaiA(2-4):KaiC(6), KaiB(6):KaiC(6) and KaiC(6):KaiB(6):KaiA(12) are among the most important forms, many form cooperatively. Undergoes a major conformational rearrangment; in the free state forms homotetramers as a dimer of dimers. When bound to the CI domain of KaiC switches to a monomeric thioredoxin-fold (KaiB(fs)). KaiB(fs) binds CikA, leading it to dephosphorylate phospho-RpaA.

Functionally, key component of the KaiABC oscillator complex, which constitutes the main circadian regulator in cyanobacteria. Complex composition changes during the circadian cycle to control KaiC phosphorylation. KaiA stimulates KaiC autophosphorylation, while KaiB sequesters KaiA, leading to KaiC autodephosphorylation. Phospho-Ser-431 KaiC accumulation triggers binding of KaiB to form the KaiB(6):KaiC(6) complex, leading to changes in output regulators CikA and SasA. KaiB switches to a thioredoxin-like fold (KaiB(fs)) when bound to KaiC. KaiB(6):KaiC(6) formation exposes a site for KaiA binding that sequesters KaiA from KaiC, making the KaiC(6):KaiB(6):KaiA(12) complex that results in KaiC autodephosphorylation. A metamorphic protein which reversibly switches between an inactive tetrameric fold and a rare, thioredoxin-like monomeric fold (KaiB(fs)). KaiB(fs) binds phospho-KaiC, KaiA and CikA. KaiA and CikA compete for binding to KaiB(fs), and KaiB(fs) and SasA compete for binding to KaiC, thus the clock oscillator and output signal pathway are tightly coupled. The protein is Circadian clock oscillator protein KaiB of Trichodesmium erythraeum (strain IMS101).